Here is an 81-residue protein sequence, read N- to C-terminus: uncharacterized protein (81 aa).

This sequence to Synechocystis PCC 6803 ssr2439.

Functionally, may have a regulatory function. This is an uncharacterized protein from Synechococcus elongatus (strain ATCC 33912 / PCC 7942 / FACHB-805) (Anacystis nidulans R2).